Reading from the N-terminus, the 227-residue chain is Translation initiation factor 6 (227 aa).

It belongs to the eIF-6 family.

Functionally, binds to the 50S ribosomal subunit and prevents its association with the 30S ribosomal subunit to form the 70S initiation complex. This chain is Translation initiation factor 6, found in Methanococcus aeolicus (strain ATCC BAA-1280 / DSM 17508 / OCM 812 / Nankai-3).